A 334-amino-acid chain; its full sequence is Ribosomal RNA small subunit methyltransferase H (334 aa).

The segment at 1 to 21 (MNALPIRTAAPSGHSGGHSST) is disordered. Residues 52–54 (GGY), D71, F98, D119, and Q126 each bind S-adenosyl-L-methionine.

Belongs to the methyltransferase superfamily. RsmH family.

Its subcellular location is the cytoplasm. The catalysed reaction is cytidine(1402) in 16S rRNA + S-adenosyl-L-methionine = N(4)-methylcytidine(1402) in 16S rRNA + S-adenosyl-L-homocysteine + H(+). Its function is as follows. Specifically methylates the N4 position of cytidine in position 1402 (C1402) of 16S rRNA. This is Ribosomal RNA small subunit methyltransferase H from Granulibacter bethesdensis (strain ATCC BAA-1260 / CGDNIH1).